Here is a 492-residue protein sequence, read N- to C-terminus: Heat shock factor protein 4 (492 aa).

The DNA-binding element occupies 17-121; the sequence is VPAFLGKLWA…QLLERVRRKV (105 aa). Residues 129-203 are hydrophobic repeat HR-A/B; it reads GRWRPEDLGR…GPLQTGSSGA (75 aa). Positions 245–323 are interactions with DUSP26, MAPK1 and MAPK2; sequence LPETTLGLSS…ECDFCVTAPP (79 aa). Residues 250 to 286 are disordered; it reads LGLSSSHRTRGPIISDIHEDSPSPDGTRLSPSSGGRR. Lys294 is covalently cross-linked (Glycyl lysine isopeptide (Lys-Gly) (interchain with G-Cter in SUMO)). Position 299 is a phosphoserine (Ser299). The disordered stretch occupies residues 337-378; it reads KGNFSPEGPRNAQQPEPRGPREVPDRGTLGLDRGARSPENLL. Residues 365-390 are hydrophobic repeat HR-C; it reads LGLDRGARSPENLLPPMLLRAPPESV.

It belongs to the HSF family. In terms of assembly, homotrimer. Exhibits constitutive DNA binding and forms trimers even in the absence of stress. Interacts with ALKBH4, DUSP26, MAPK1, MAPK2, MAPK8 and MAP kinase p38. In terms of processing, phosphorylated mainly on serine residues. Phosphorylation on Ser-299 promotes sumoylation on Lys-294. Post-translationally, constitutively sumoylated. Sumoylation represses the transcriptional activity and is promoted by phosphorylation on Ser-299.

The protein localises to the nucleus. Heat-shock transcription factor that specifically binds heat shock promoter elements (HSE). Required for denucleation and organelle rupture and degradation that occur during eye lens terminal differentiation, when fiber cells that compose the lens degrade all membrane-bound organelles in order to provide lens with transparency to allow the passage of light. In this process, may regulate denucleation of lens fiber cells in part by activating DNASE2B transcription. May be involved in DNA repair through the transcriptional regulation of RAD51. May up-regulate p53/TP53 protein in eye lens fiber cells, possibly through protein stabilization. In the eye lens, controls the expression of alpha-crystallin B chain/CRYAB and consequently may be involved in the regulation of lysosomal acidification. The chain is Heat shock factor protein 4 (HSF4) from Canis lupus familiaris (Dog).